Consider the following 260-residue polypeptide: Hydroxyethylthiazole kinase 2 (260 aa).

M40 is a binding site for substrate. Residues R116 and T161 each coordinate ATP. A188 is a substrate binding site.

The protein belongs to the Thz kinase family. It depends on Mg(2+) as a cofactor.

It catalyses the reaction 5-(2-hydroxyethyl)-4-methylthiazole + ATP = 4-methyl-5-(2-phosphooxyethyl)-thiazole + ADP + H(+). It participates in cofactor biosynthesis; thiamine diphosphate biosynthesis; 4-methyl-5-(2-phosphoethyl)-thiazole from 5-(2-hydroxyethyl)-4-methylthiazole: step 1/1. Catalyzes the phosphorylation of the hydroxyl group of 4-methyl-5-beta-hydroxyethylthiazole (THZ). The protein is Hydroxyethylthiazole kinase 2 of Oceanobacillus iheyensis (strain DSM 14371 / CIP 107618 / JCM 11309 / KCTC 3954 / HTE831).